The following is a 63-amino-acid chain: Large ribosomal subunit protein uL30 (63 aa).

Belongs to the universal ribosomal protein uL30 family. In terms of assembly, part of the 50S ribosomal subunit.

This chain is Large ribosomal subunit protein uL30, found in Xylella fastidiosa (strain 9a5c).